Here is a 205-residue protein sequence, read N- to C-terminus: Thiamine-phosphate synthase (205 aa).

4-amino-2-methyl-5-(diphosphooxymethyl)pyrimidine contacts are provided by residues 37–41 and asparagine 69; that span reads QVREK. Mg(2+)-binding residues include aspartate 70 and aspartate 89. Serine 108 contributes to the 4-amino-2-methyl-5-(diphosphooxymethyl)pyrimidine binding site. 134 to 136 lines the 2-[(2R,5Z)-2-carboxy-4-methylthiazol-5(2H)-ylidene]ethyl phosphate pocket; the sequence is TGS. A 4-amino-2-methyl-5-(diphosphooxymethyl)pyrimidine-binding site is contributed by lysine 137. Residues glycine 165 and 185–186 each bind 2-[(2R,5Z)-2-carboxy-4-methylthiazol-5(2H)-ylidene]ethyl phosphate; that span reads IS.

Belongs to the thiamine-phosphate synthase family. The cofactor is Mg(2+).

It catalyses the reaction 2-[(2R,5Z)-2-carboxy-4-methylthiazol-5(2H)-ylidene]ethyl phosphate + 4-amino-2-methyl-5-(diphosphooxymethyl)pyrimidine + 2 H(+) = thiamine phosphate + CO2 + diphosphate. The enzyme catalyses 2-(2-carboxy-4-methylthiazol-5-yl)ethyl phosphate + 4-amino-2-methyl-5-(diphosphooxymethyl)pyrimidine + 2 H(+) = thiamine phosphate + CO2 + diphosphate. The catalysed reaction is 4-methyl-5-(2-phosphooxyethyl)-thiazole + 4-amino-2-methyl-5-(diphosphooxymethyl)pyrimidine + H(+) = thiamine phosphate + diphosphate. Its pathway is cofactor biosynthesis; thiamine diphosphate biosynthesis; thiamine phosphate from 4-amino-2-methyl-5-diphosphomethylpyrimidine and 4-methyl-5-(2-phosphoethyl)-thiazole: step 1/1. In terms of biological role, condenses 4-methyl-5-(beta-hydroxyethyl)thiazole monophosphate (THZ-P) and 2-methyl-4-amino-5-hydroxymethyl pyrimidine pyrophosphate (HMP-PP) to form thiamine monophosphate (TMP). In Clostridium botulinum (strain 657 / Type Ba4), this protein is Thiamine-phosphate synthase.